Here is a 595-residue protein sequence, read N- to C-terminus: CDPK-related kinase 3 (595 aa).

Positions 1–131 are disordered; it reads MGQCYGKVNQ…GTEPEQSLDK (131 aa). G2 is lipidated: N-myristoyl glycine. A compositionally biased stretch (polar residues) spans 20–37; sequence NTTTYVVSGDGNQIQPLT. Residues 111-124 are compositionally biased toward basic and acidic residues; that stretch reads KPKEGPIPEERGTE. The region spanning 143-405 is the Protein kinase domain; the sequence is YELGKEVGRG…AVQALTHPWL (263 aa). ATP-binding positions include 149-157 and K175; that span reads VGRGHFGHT. D271 acts as the Proton acceptor in catalysis. S311 is subject to Phosphoserine. Phosphoserine; by CPK1 and CPK34 is present on S353. Positions 409 to 439 are autoinhibitory domain; sequence SRVIPLDILIYKLVKAYLHATPLRRAALKAL. Positions 428-448 are calmodulin binding (CaMBD); sequence ATPLRRAALKALAKALTENEL. EF-hand domains follow at residues 446 to 482, 483 to 518, 519 to 558, and 559 to 588; these read NELV…ATDA, MRES…IHQL, EAVD…GASA, and YGHL…VTLR. Residues N461, D463, S465, K502, E507, N540, E547, S568, D570, and K572 each contribute to the Ca(2+) site. Phosphoserine is present on S574.

This sequence belongs to the protein kinase superfamily. Ser/Thr protein kinase family. CDPK subfamily. Binds calmodulin (CaM) in a calcium-dependent manner. Interacts with GLN1-1. Post-translationally, autophosphorylated. As to expression, ubiquitously expressed with higher levels in siliques and roots, especially at the root cap. Particularly present in vascular bundles of stems and leaves.

The protein localises to the cytoplasm. It is found in the membrane. It carries out the reaction L-seryl-[protein] + ATP = O-phospho-L-seryl-[protein] + ADP + H(+). The enzyme catalyses L-threonyl-[protein] + ATP = O-phospho-L-threonyl-[protein] + ADP + H(+). With respect to regulation, not activated by calcium. Autophosphorylation may play an important role in the regulation of the kinase activity. Stimulated by magnesium ions (optimum at 10-15 mM) and manganese ions. Functionally, may play a role in signal transduction pathways that involve calcium as a second messenger. Serine/threonine kinase that phosphorylates histone H3 an GLN1-1. The sequence is that of CDPK-related kinase 3 (CRK3) from Arabidopsis thaliana (Mouse-ear cress).